The primary structure comprises 482 residues: Nucleoside triphosphate pyrophosphatase/Nudix hydrolase fusion protein (482 aa).

Residues 1 to 299 are maf-like; the sequence is MSIPLILASK…DLWNVGRGEL (299 aa). The Proton acceptor role is filled by D167. Positions 338-475 constitute a Nudix hydrolase domain; the sequence is GTNGASGILL…TDWPRFAARL (138 aa).

It in the N-terminal section; belongs to the Maf family. A divalent metal cation serves as cofactor.

The protein localises to the cytoplasm. It catalyses the reaction a ribonucleoside 5'-triphosphate + H2O = a ribonucleoside 5'-phosphate + diphosphate + H(+). The catalysed reaction is a 2'-deoxyribonucleoside 5'-triphosphate + H2O = a 2'-deoxyribonucleoside 5'-phosphate + diphosphate + H(+). In terms of biological role, nucleoside triphosphate pyrophosphatase. May have a dual role in cell division arrest and in preventing the incorporation of modified nucleotides into cellular nucleic acids. The chain is Nucleoside triphosphate pyrophosphatase/Nudix hydrolase fusion protein from Bifidobacterium longum (strain NCC 2705).